The primary structure comprises 249 residues: ATP synthase subunit a (249 aa).

6 consecutive transmembrane segments (helical) span residues 30–50 (QSPL…YVGM), 86–106 (FFPF…LGLL), 115–135 (HIAV…LASI), 146–166 (FLPA…EIIS), 191–211 (VFAG…VLAI), and 218–238 (IALT…FAIL).

It belongs to the ATPase A chain family. F-type ATPases have 2 components, CF(1) - the catalytic core - and CF(0) - the membrane proton channel. CF(1) has five subunits: alpha(3), beta(3), gamma(1), delta(1), epsilon(1). CF(0) has three main subunits: a(1), b(2) and c(9-12). The alpha and beta chains form an alternating ring which encloses part of the gamma chain. CF(1) is attached to CF(0) by a central stalk formed by the gamma and epsilon chains, while a peripheral stalk is formed by the delta and b chains.

The protein resides in the cell inner membrane. Functionally, key component of the proton channel; it plays a direct role in the translocation of protons across the membrane. The protein is ATP synthase subunit a of Gluconobacter oxydans (strain 621H) (Gluconobacter suboxydans).